Consider the following 271-residue polypeptide: Shikimate dehydrogenase (NADP(+)) (271 aa).

Residues 19–21 and threonine 65 contribute to the shikimate site; that span reads SLS. The active-site Proton acceptor is lysine 69. An NADP(+)-binding site is contributed by glutamate 81. Shikimate-binding residues include asparagine 90 and aspartate 105. Residues 128-132, 150-155, and isoleucine 211 each bind NADP(+); these read GAGGA and NRTIEK. Tyrosine 213 is a shikimate binding site. Glycine 234 provides a ligand contact to NADP(+).

It belongs to the shikimate dehydrogenase family. As to quaternary structure, homodimer.

The catalysed reaction is shikimate + NADP(+) = 3-dehydroshikimate + NADPH + H(+). It functions in the pathway metabolic intermediate biosynthesis; chorismate biosynthesis; chorismate from D-erythrose 4-phosphate and phosphoenolpyruvate: step 4/7. Functionally, involved in the biosynthesis of the chorismate, which leads to the biosynthesis of aromatic amino acids. Catalyzes the reversible NADPH linked reduction of 3-dehydroshikimate (DHSA) to yield shikimate (SA). The polypeptide is Shikimate dehydrogenase (NADP(+)) (Pyrococcus furiosus (strain ATCC 43587 / DSM 3638 / JCM 8422 / Vc1)).